The primary structure comprises 308 residues: MGNTLGLAPMGTLPRRSPRREEPLPNPGSFDELHRLCKDVFPAQMEGVKLVVNKVLSSHFQVAHTIHMSALGLPGYHLHAAYAGDWQLSPTEVFPTVVGDMDSSGSLNAQVLLLLAERLRAKAVFQTQQAKFLTWQFDGEYRGDDYTATLTLGNPDLIGESVIMVAHFLQSLTHRLVLGGELVYHRRPGEEGAILTLAGKYSAVHWVATLNVGSGGAHASYYHRANEQVQVGVEFEANTRLQDTTFSFGYHLTLPQANMVFRGLVDSNWCVGAVLEKKMPPLPVTLALGAFLNHWRNRFHCGFSITVG.

Positions 1–29 (MGNTLGLAPMGTLPRRSPRREEPLPNPGS) are disordered. Residues 281–308 (PLPVTLALGAFLNHWRNRFHCGFSITVG) form a required for mitochondrial targeting region.

The protein belongs to the Tom40 family. Forms part of the preprotein translocase of the outer mitochondrial membrane (TOM complex) containing TOMM22, TOMM40, TOMM40L and TOMM70. Interacts with mitochondrial targeting sequences.

Its subcellular location is the mitochondrion outer membrane. Functionally, potential channel-forming protein implicated in import of protein precursors into mitochondria. The chain is Mitochondrial import receptor subunit TOM40B (TOMM40L) from Homo sapiens (Human).